Reading from the N-terminus, the 559-residue chain is 3-aminoavenalumate diazotase (559 aa).

Ser181 is a Mg(2+) binding site. ATP contacts are provided by Ala227, Gly332, and Ser336. Glu337 serves as a coordination point for Mg(2+). Asp416 and Arg437 together coordinate ATP.

The protein belongs to the ATP-dependent AMP-binding enzyme family. Mg(2+) is required as a cofactor.

It catalyses the reaction 3-aminoavenalumate + nitrite + ATP = 3-diazoavenalumate + AMP + diphosphate + H2O. The enzyme catalyses (E)-3-aminocoumarate + nitrite + ATP + H(+) = (E)-3-diazocoumarate + AMP + diphosphate + H2O. It carries out the reaction 3-amino-4-hydroxybenzoate + nitrite + ATP + H(+) = 3-diazo-4-hydroxybenzoate + AMP + diphosphate + H2O. Ligase involved in the biosynthesis of avenalumic acid (AVA). Catalyzes the diazotization of 3-aminoavenalumic acid (3-AAA) to 3-diazoavenalumic acid (3-DAA). It can also act on 3-aminocoumaric acid (3-ACA) and 3-amino-4-hydroxybenzoic acid (3,4-AHBA) with lower activity. This chain is 3-aminoavenalumate diazotase, found in Streptomyces sp.